The following is a 267-amino-acid chain: Protein HesA, heterocyst (267 aa).

It belongs to the HesA/MoeB/ThiF family.

The sequence is that of Protein HesA, heterocyst (hesA1) from Trichormus variabilis (strain ATCC 29413 / PCC 7937) (Anabaena variabilis).